We begin with the raw amino-acid sequence, 278 residues long: Purine nucleoside phosphorylase YlmD (278 aa).

The Zn(2+) site is built by H87, C132, and H149.

It belongs to the purine nucleoside phosphorylase YfiH/LACC1 family. Homodimer. The cofactor is Cu(2+). Zn(2+) is required as a cofactor.

It carries out the reaction adenosine + phosphate = alpha-D-ribose 1-phosphate + adenine. The catalysed reaction is S-methyl-5'-thioadenosine + phosphate = 5-(methylsulfanyl)-alpha-D-ribose 1-phosphate + adenine. The enzyme catalyses inosine + phosphate = alpha-D-ribose 1-phosphate + hypoxanthine. It catalyses the reaction adenosine + H2O + H(+) = inosine + NH4(+). Purine nucleoside enzyme that catalyzes the phosphorolysis of adenosine and inosine nucleosides, yielding D-ribose 1-phosphate and the respective free bases, adenine and hypoxanthine. Also catalyzes the phosphorolysis of S-methyl-5'-thioadenosine into adenine and S-methyl-5-thio-alpha-D-ribose 1-phosphate. Also has adenosine deaminase activity. The polypeptide is Purine nucleoside phosphorylase YlmD (ylmD) (Bacillus subtilis (strain 168)).